We begin with the raw amino-acid sequence, 151 residues long: NADPH-dependent 7-cyano-7-deazaguanine reductase (151 aa).

The Thioimide intermediate role is filled by Cys-51. Residue Asp-58 is the Proton donor of the active site. Substrate is bound by residues 73–75 (VES) and 92–93 (HE).

Belongs to the GTP cyclohydrolase I family. QueF type 1 subfamily.

It localises to the cytoplasm. The enzyme catalyses 7-aminomethyl-7-carbaguanine + 2 NADP(+) = 7-cyano-7-deazaguanine + 2 NADPH + 3 H(+). It functions in the pathway tRNA modification; tRNA-queuosine biosynthesis. In terms of biological role, catalyzes the NADPH-dependent reduction of 7-cyano-7-deazaguanine (preQ0) to 7-aminomethyl-7-deazaguanine (preQ1). The chain is NADPH-dependent 7-cyano-7-deazaguanine reductase from Bacteroides thetaiotaomicron (strain ATCC 29148 / DSM 2079 / JCM 5827 / CCUG 10774 / NCTC 10582 / VPI-5482 / E50).